A 427-amino-acid chain; its full sequence is Serine hydroxymethyltransferase (427 aa).

(6S)-5,6,7,8-tetrahydrofolate contacts are provided by residues Leu-122 and 126–128; that span reads GHL. Lys-231 bears the N6-(pyridoxal phosphate)lysine mark. (6S)-5,6,7,8-tetrahydrofolate is bound by residues Glu-247 and 355-357; that span reads SPF.

Belongs to the SHMT family. In terms of assembly, homodimer. Pyridoxal 5'-phosphate is required as a cofactor.

The protein resides in the cytoplasm. The enzyme catalyses (6R)-5,10-methylene-5,6,7,8-tetrahydrofolate + glycine + H2O = (6S)-5,6,7,8-tetrahydrofolate + L-serine. Its pathway is one-carbon metabolism; tetrahydrofolate interconversion. It participates in amino-acid biosynthesis; glycine biosynthesis; glycine from L-serine: step 1/1. In terms of biological role, catalyzes the reversible interconversion of serine and glycine with tetrahydrofolate (THF) serving as the one-carbon carrier. This reaction serves as the major source of one-carbon groups required for the biosynthesis of purines, thymidylate, methionine, and other important biomolecules. Also exhibits THF-independent aldolase activity toward beta-hydroxyamino acids, producing glycine and aldehydes, via a retro-aldol mechanism. The sequence is that of Serine hydroxymethyltransferase from Crocosphaera subtropica (strain ATCC 51142 / BH68) (Cyanothece sp. (strain ATCC 51142)).